The following is a 92-amino-acid chain: Small ribosomal subunit protein bS20 (92 aa).

The disordered stretch occupies residues 1–23 (MANTPSAKKRAKQAEKRRSHNAS). Positions 7-20 (AKKRAKQAEKRRSH) are enriched in basic residues.

Belongs to the bacterial ribosomal protein bS20 family.

Its function is as follows. Binds directly to 16S ribosomal RNA. In Pseudomonas fluorescens (strain SBW25), this protein is Small ribosomal subunit protein bS20.